The chain runs to 179 residues: Large ribosomal subunit protein uL5 (179 aa).

The protein belongs to the universal ribosomal protein uL5 family. Part of the 50S ribosomal subunit; part of the 5S rRNA/L5/L18/L25 subcomplex. Contacts the 5S rRNA and the P site tRNA. Forms a bridge to the 30S subunit in the 70S ribosome.

Its function is as follows. This is one of the proteins that bind and probably mediate the attachment of the 5S RNA into the large ribosomal subunit, where it forms part of the central protuberance. In the 70S ribosome it contacts protein S13 of the 30S subunit (bridge B1b), connecting the 2 subunits; this bridge is implicated in subunit movement. Contacts the P site tRNA; the 5S rRNA and some of its associated proteins might help stabilize positioning of ribosome-bound tRNAs. This Lachnoclostridium phytofermentans (strain ATCC 700394 / DSM 18823 / ISDg) (Clostridium phytofermentans) protein is Large ribosomal subunit protein uL5.